Reading from the N-terminus, the 905-residue chain is DNA mismatch repair protein MutS (905 aa).

The disordered stretch occupies residues 389-410; the sequence is ERPANPEGTYPTDAETSGDTLP. Residue 638-645 coordinates ATP; the sequence is GPNMAGKS. Residues 826–847 form a disordered region; sequence RDAARGTNSAPSRQTLPGLDLP. Positions 831–840 are enriched in polar residues; sequence GTNSAPSRQT.

Belongs to the DNA mismatch repair MutS family.

Functionally, this protein is involved in the repair of mismatches in DNA. It is possible that it carries out the mismatch recognition step. This protein has a weak ATPase activity. This chain is DNA mismatch repair protein MutS, found in Nitratidesulfovibrio vulgaris (strain ATCC 29579 / DSM 644 / CCUG 34227 / NCIMB 8303 / VKM B-1760 / Hildenborough) (Desulfovibrio vulgaris).